The primary structure comprises 432 residues: GRAM domain-containing protein 2B (432 aa).

Residue Met1 is modified to N-acetylmethionine. Disordered stretches follow at residues 1 to 61 and 74 to 106; these read MTEL…SPDQ and DGASLASDKNDCKTESKNDPKTERKKSSSSSQY. 2 stretches are compositionally biased toward basic and acidic residues: residues 9–39 and 81–99; these read EDTKPAKVLGKRESKLGSAHSEAENGVEEKK and DKNDCKTESKNDPKTERKK. Positions 110-177 constitute a GRAM domain; the sequence is MHFHKLFLSV…FSVTLIKKTK (68 aa). Residues 220-233 are compositionally biased toward polar residues; that stretch reads TSVGNSPNPSSAEN. The tract at residues 220–239 is disordered; sequence TSVGNSPNPSSAENSFRADR. A phosphoserine mark is found at Ser225, Ser242, and Ser252. The disordered stretch occupies residues 262 to 285; the sequence is RQDMEGYSSSGSQTPESENSRDFH. Residues 268-278 are compositionally biased toward polar residues; the sequence is YSSSGSQTPES.

The polypeptide is GRAM domain-containing protein 2B (GRAMD2B) (Homo sapiens (Human)).